A 339-amino-acid chain; its full sequence is MVREEVAGSTQTLQWKCVESRVDSKRLYYGRFILSPLRKGQADTVGIALRRALLGEIEGTCITRAKFGSVPHEYSTIAGIEESVQEILLNLKEIVLRSNLYGVRDASICVKGPRYITAQDIILPPSVEIVDTAQPIANLTEPIDFCIDLQIKRDRGYQTELRKNYQDGSYPIDAVSMPVRNVNYSIFSCGNGNEKHEILFLEIWTNGSLTPKEALYEASRNLIDLFLPFLHAEEEGTSFEENKNRFTPPPFTFKKRLTNLKKNKKGIPLNCIFIDQLELTSRTYNCLKRANIHTLLDLLSKTEEDLLRIDSFRMEDRKHIWDTLEKHLPIDLLKNKLSF.

The alpha N-terminal domain (alpha-NTD) stretch occupies residues 1–233 (MVREEVAGST…DLFLPFLHAE (233 aa)). The tract at residues 264-339 (KKGIPLNCIF…IDLLKNKLSF (76 aa)) is alpha C-terminal domain (alpha-CTD).

Belongs to the RNA polymerase alpha chain family. In plastids the minimal PEP RNA polymerase catalytic core is composed of four subunits: alpha, beta, beta', and beta''. When a (nuclear-encoded) sigma factor is associated with the core the holoenzyme is formed, which can initiate transcription.

Its subcellular location is the plastid. It is found in the chloroplast. The enzyme catalyses RNA(n) + a ribonucleoside 5'-triphosphate = RNA(n+1) + diphosphate. DNA-dependent RNA polymerase catalyzes the transcription of DNA into RNA using the four ribonucleoside triphosphates as substrates. The chain is DNA-directed RNA polymerase subunit alpha from Thinopyrum elongatum (Tall wheatgrass).